The sequence spans 389 residues: Large envelope protein (389 aa).

The residue at position 1 (Met1) is an N-acetylmethionine. A lipid anchor (N-myristoyl glycine; by host) is attached at Gly2. The pre-S1 stretch occupies residues 2-108 (GQNLSTSNPL…PPLRNTHPQA (107 aa)). Residues 2 to 163 (GQNLSTSNPL…FSRIGDPALN (162 aa)) form a pre-S region. The Virion surface; in external conformation portion of the chain corresponds to 2-170 (GQNLSTSNPL…ALNMENITSG (169 aa)). Residues 2-242 (GQNLSTSNPL…PGYRWMCLRR (241 aa)) are Intravirion; in internal conformation-facing. Residues 76-103 (TLPANPPPASTNRQSGRQPTPLSPPLRN) form a disordered region. Positions 85-95 (STNRQSGRQPT) are enriched in polar residues. Residues 109-163 (MQWNSTTFHQTLQDPRVRGLYLPAGGSSSGTVNPVPTTVSPISSIFSRIGDPALN) are pre-S2. The helical transmembrane segment at 171 to 191 (FLGPLLVLQAGFFLLTKILTI) threads the bilayer. Topologically, residues 192–242 (PKSLDSWWTSLNFLGGTTVCLGQNSQSPTSNHSPTSCPPTCPGYRWMCLRR) are intravirion; in external conformation. Residues 243-263 (FIIFLFILLLCLIFLLVLLDY) traverse the membrane as a helical segment. The Virion surface segment spans residues 264–337 (QGMLPVCPLI…WASARFSWLS (74 aa)). An N-linked (GlcNAc...) asparagine; by host glycan is attached at Asn309. The chain crosses the membrane as a helical span at residues 338 to 358 (LLVPFVQWFVGLSPTVWLLVI). Topologically, residues 359–364 (WMMWYW) are intravirion. The helical transmembrane segment at 365–387 (GPKLFTILSPFLPLLPIFFCLWV) threads the bilayer. At 388-389 (YI) the chain is on the virion surface side.

This sequence belongs to the orthohepadnavirus major surface antigen family. As to quaternary structure, in its internal form (Li-HBsAg), interacts with the capsid protein and with the isoform S. Interacts with host chaperone CANX. In terms of assembly, associates with host chaperone CANX through its pre-S2 N glycan; this association may be essential for isoform M proper secretion. Interacts with isoform L. Interacts with the antigens of satellite virus HDV (HDVAgs); this interaction is required for encapsidation of HDV genomic RNA. Post-translationally, isoform M is N-terminally acetylated by host at a ratio of 90%, and N-glycosylated by host at the pre-S2 region. In terms of processing, myristoylated.

The protein resides in the virion membrane. Functionally, the large envelope protein exists in two topological conformations, one which is termed 'external' or Le-HBsAg and the other 'internal' or Li-HBsAg. In its external conformation the protein attaches the virus to cell receptors and thereby initiating infection. This interaction determines the species specificity and liver tropism. This attachment induces virion internalization predominantly through caveolin-mediated endocytosis. The large envelope protein also assures fusion between virion membrane and endosomal membrane. In its internal conformation the protein plays a role in virion morphogenesis and mediates the contact with the nucleocapsid like a matrix protein. Its function is as follows. The middle envelope protein plays an important role in the budding of the virion. It is involved in the induction of budding in a nucleocapsid independent way. In this process the majority of envelope proteins bud to form subviral lipoprotein particles of 22 nm of diameter that do not contain a nucleocapsid. The sequence is that of Large envelope protein from Homo sapiens (Human).